Here is a 228-residue protein sequence, read N- to C-terminus: Urease accessory protein UreF (228 aa).

The protein belongs to the UreF family. As to quaternary structure, ureD, UreF and UreG form a complex that acts as a GTP-hydrolysis-dependent molecular chaperone, activating the urease apoprotein by helping to assemble the nickel containing metallocenter of UreC. The UreE protein probably delivers the nickel.

The protein resides in the cytoplasm. In terms of biological role, required for maturation of urease via the functional incorporation of the urease nickel metallocenter. This is Urease accessory protein UreF from Yersinia pseudotuberculosis serotype IB (strain PB1/+).